Reading from the N-terminus, the 194-residue chain is Adenylate kinase (194 aa).

An ATP-binding site is contributed by 12–17 (GSGKTT). Residues 34-63 (STGDLLREEVKKGTPLGATIASFIDNGQLV) form an NMP region. Residues Thr-35, Arg-40, 61–63 (QLV), 88–91 (GFPR), and Gln-95 each bind AMP. Residues 130–136 (GRARGAD) form an LID region. Arg-131 serves as a coordination point for ATP. 2 residues coordinate AMP: Arg-133 and Arg-145. Arg-173 provides a ligand contact to ATP.

This sequence belongs to the adenylate kinase family. Monomer.

It localises to the cytoplasm. It carries out the reaction AMP + ATP = 2 ADP. The protein operates within purine metabolism; AMP biosynthesis via salvage pathway; AMP from ADP: step 1/1. In terms of biological role, catalyzes the reversible transfer of the terminal phosphate group between ATP and AMP. Plays an important role in cellular energy homeostasis and in adenine nucleotide metabolism. This Nitratiruptor sp. (strain SB155-2) protein is Adenylate kinase.